We begin with the raw amino-acid sequence, 872 residues long: Alanine--tRNA ligase (872 aa).

Zn(2+) contacts are provided by His-566, His-570, Cys-668, and His-672.

This sequence belongs to the class-II aminoacyl-tRNA synthetase family. The cofactor is Zn(2+).

The protein resides in the cytoplasm. It catalyses the reaction tRNA(Ala) + L-alanine + ATP = L-alanyl-tRNA(Ala) + AMP + diphosphate. In terms of biological role, catalyzes the attachment of alanine to tRNA(Ala) in a two-step reaction: alanine is first activated by ATP to form Ala-AMP and then transferred to the acceptor end of tRNA(Ala). Also edits incorrectly charged Ser-tRNA(Ala) and Gly-tRNA(Ala) via its editing domain. The sequence is that of Alanine--tRNA ligase from Lactococcus lactis subsp. lactis (strain IL1403) (Streptococcus lactis).